The primary structure comprises 1028 residues: Formin-like protein 3 (1028 aa).

A lipid anchor (N-myristoyl glycine) is attached at glycine 2. In terms of domain architecture, GBD/FH3 spans 26 to 472 (MPMPEPCELE…EAFQRRCHLE (447 aa)). Threonine 95 carries the phosphothreonine modification. Serine 174 bears the Phosphoserine mark. A disordered region spans residues 493–541 (ELSEGMPPSDLDLLAPAPPPEEVLPLPPPPAPPLPPPPPPLPDKCPPAP). The segment covering 508-541 (PAPPPEEVLPLPPPPAPPLPPPPPPLPDKCPPAP) has biased composition (pro residues). In terms of domain architecture, FH2 spans 561–951 (IKKPIKTKFR…MREKQLAQEA (391 aa)). In terms of domain architecture, DAD spans 986 to 1018 (YEGKDGTIEDIITVLKSVPFTARTAKRGSRFFC). At serine 1014 the chain carries Phosphoserine.

The protein belongs to the formin homology family. Interacts with SRGAP2 (via SH3 domain). In terms of tissue distribution, expressed in endothelial cells.

It localises to the cytoplasm. Its subcellular location is the cell membrane. In terms of biological role, plays a role in the regulation of cell morphology and cytoskeletal organization. Required in the control of cell shape and migration. Required for developmental angiogenesis. In this process, required for microtubule reorganization and for efficient endothelial cell elongation. In quiescent endothelial cells, triggers rearrangement of the actin cytoskeleton, but does not alter microtubule alignement. The polypeptide is Formin-like protein 3 (FMNL3) (Homo sapiens (Human)).